Here is an 86-residue protein sequence, read N- to C-terminus: U15-lycotoxin-Ls1c (86 aa).

A signal peptide spans 1–20 (MNSKIFAVLLLLAFLSCVLS). The WAP domain occupies 21–66 (DQYCPKSSITACKKMNIRNDCCKDDDCTGGSWCCATPCGNICKYPT). Intrachain disulfides connect C24–C54, C32–C58, C41–C53, C42–C80, and C47–C62.

This sequence belongs to the venom protein 11 family. 01 (wap-1) subfamily. Post-translationally, contains 5 disulfide bonds. Expressed by the venom gland.

It localises to the secreted. In terms of biological role, has antibacterial activity. This chain is U15-lycotoxin-Ls1c, found in Lycosa singoriensis (Wolf spider).